Reading from the N-terminus, the 246-residue chain is Adenosylcobinamide-GDP ribazoletransferase (246 aa).

6 helical membrane-spanning segments follow: residues 34–54 (IVTF…VALL), 59–79 (CGVP…TGGF), 113–133 (GGLA…ELLL), 138–158 (PIAA…LLMY), 171–191 (LFIG…GVAL), and 194–214 (VLLG…IWGL).

Belongs to the CobS family. It depends on Mg(2+) as a cofactor.

It is found in the cell inner membrane. It catalyses the reaction alpha-ribazole + adenosylcob(III)inamide-GDP = adenosylcob(III)alamin + GMP + H(+). The catalysed reaction is alpha-ribazole 5'-phosphate + adenosylcob(III)inamide-GDP = adenosylcob(III)alamin 5'-phosphate + GMP + H(+). The protein operates within cofactor biosynthesis; adenosylcobalamin biosynthesis; adenosylcobalamin from cob(II)yrinate a,c-diamide: step 7/7. Its function is as follows. Joins adenosylcobinamide-GDP and alpha-ribazole to generate adenosylcobalamin (Ado-cobalamin). Also synthesizes adenosylcobalamin 5'-phosphate from adenosylcobinamide-GDP and alpha-ribazole 5'-phosphate. This Klebsiella pneumoniae (strain 342) protein is Adenosylcobinamide-GDP ribazoletransferase.